A 79-amino-acid chain; its full sequence is uncharacterized protein (79 aa).

Its subcellular location is the mitochondrion. This is an uncharacterized protein from Oenothera berteroana (Bertero's evening primrose).